The sequence spans 238 residues: Ribonuclease PH (238 aa).

Phosphate is bound by residues Arg-86 and Gly-124–Arg-126.

It belongs to the RNase PH family. As to quaternary structure, homohexameric ring arranged as a trimer of dimers.

It carries out the reaction tRNA(n+1) + phosphate = tRNA(n) + a ribonucleoside 5'-diphosphate. Its function is as follows. Phosphorolytic 3'-5' exoribonuclease that plays an important role in tRNA 3'-end maturation. Removes nucleotide residues following the 3'-CCA terminus of tRNAs; can also add nucleotides to the ends of RNA molecules by using nucleoside diphosphates as substrates, but this may not be physiologically important. Probably plays a role in initiation of 16S rRNA degradation (leading to ribosome degradation) during starvation. The sequence is that of Ribonuclease PH from Shigella flexneri serotype 5b (strain 8401).